A 649-amino-acid polypeptide reads, in one-letter code: 1-deoxy-D-xylulose-5-phosphate synthase 1 (649 aa).

Thiamine diphosphate is bound by residues His-73 and 113 to 115 (SHA). Asp-144 contributes to the Mg(2+) binding site. Thiamine diphosphate-binding positions include 145 to 146 (GA), Asn-174, Tyr-285, and Glu-367. Position 174 (Asn-174) interacts with Mg(2+). Residues 623–649 (LLPGTGTRPGAQEYRPRMPLTDWSEPA) are disordered.

This sequence belongs to the transketolase family. DXPS subfamily. In terms of assembly, homodimer. The cofactor is Mg(2+). Thiamine diphosphate serves as cofactor.

The catalysed reaction is D-glyceraldehyde 3-phosphate + pyruvate + H(+) = 1-deoxy-D-xylulose 5-phosphate + CO2. It participates in metabolic intermediate biosynthesis; 1-deoxy-D-xylulose 5-phosphate biosynthesis; 1-deoxy-D-xylulose 5-phosphate from D-glyceraldehyde 3-phosphate and pyruvate: step 1/1. Functionally, catalyzes the acyloin condensation reaction between C atoms 2 and 3 of pyruvate and glyceraldehyde 3-phosphate to yield 1-deoxy-D-xylulose-5-phosphate (DXP). In Kitasatospora griseola (Streptomyces griseolosporeus), this protein is 1-deoxy-D-xylulose-5-phosphate synthase 1.